The chain runs to 234 residues: Sugar fermentation stimulation protein A (234 aa).

The segment at residues 201-220 (LLSEAQNKGVEVLAYKAELS) is a DNA-binding region (H-T-H motif).

It belongs to the SfsA family.

Functionally, binds to DNA non-specifically. Could be a regulatory factor involved in maltose metabolism. This chain is Sugar fermentation stimulation protein A, found in Salmonella dublin (strain CT_02021853).